Reading from the N-terminus, the 204-residue chain is Imidazoleglycerol-phosphate dehydratase (204 aa).

This sequence belongs to the imidazoleglycerol-phosphate dehydratase family.

The protein localises to the cytoplasm. The enzyme catalyses D-erythro-1-(imidazol-4-yl)glycerol 3-phosphate = 3-(imidazol-4-yl)-2-oxopropyl phosphate + H2O. It participates in amino-acid biosynthesis; L-histidine biosynthesis; L-histidine from 5-phospho-alpha-D-ribose 1-diphosphate: step 6/9. This chain is Imidazoleglycerol-phosphate dehydratase, found in Albidiferax ferrireducens (strain ATCC BAA-621 / DSM 15236 / T118) (Rhodoferax ferrireducens).